Reading from the N-terminus, the 115-residue chain is Rubredoxin (115 aa).

The Rubredoxin-like domain occupies 15–66; sequence SPNHECRACGYVYIPSQGDQKTSVSPGTPFEALPLNWKCPVCGAPRNYFIST. Cys20, Cys23, Cys53, and Cys56 together coordinate Fe cation.

It belongs to the rubredoxin family. Fe(3+) serves as cofactor.

Functionally, rubredoxin is a small nonheme, iron protein lacking acid-labile sulfide. Its single Fe, chelated to 4 Cys, functions as an electron acceptor and may also stabilize the conformation of the molecule. Could be involved in hydrogenase-linked redox processes. The chain is Rubredoxin (rub) from Synechocystis sp. (strain ATCC 27184 / PCC 6803 / Kazusa).